The primary structure comprises 575 residues: Protein AUXIN SIGNALING F-BOX 2 (575 aa).

Residues 1–47 enclose the F-box domain; sequence MNYFPDEVIEHVFDFVTSHKDRNAISLVCKSWYKIERYSRQKVFIGN. Residue K69 coordinates 1D-myo-inositol hexakisphosphate. Positions 76 to 77 are interaction with auxin-responsive proteins; sequence DF. 1D-myo-inositol hexakisphosphate is bound by residues 108–109 and R340; that span reads KR. Positions 343 to 348 are interaction with auxin-responsive proteins; it reads PSDLLG. Residue 396–398 coordinates 1D-myo-inositol hexakisphosphate; sequence RFR. Residues 400–404 form an interaction with auxin-responsive proteins region; sequence CILEP. R431 contributes to the 1D-myo-inositol hexakisphosphate binding site. Positions 459 to 460 are interaction with auxin-responsive proteins; that stretch reads AF. 1D-myo-inositol hexakisphosphate contacts are provided by residues 479-480 and R504; that span reads KK.

As to quaternary structure, part of a SCF (SKP1-cullin-F-box) protein ligase complex. Interacts with Aux/IAA proteins (IAA7) in an auxin-dependent manner. Ubiquitous, with higher levels in seedlings.

Its subcellular location is the nucleus. It participates in protein modification; protein ubiquitination. Its function is as follows. Component of SCF(ASK-cullin-F-box) E3 ubiquitin ligase complexes, which may mediate the ubiquitination and subsequent proteasomal degradation of target proteins. Confers sensitivity to the virulent bacterial pathogen P.syringae. Auxin receptor that mediates Aux/IAA proteins proteasomal degradation and auxin-regulated transcription. Involved in embryogenesis regulation by auxin. The protein is Protein AUXIN SIGNALING F-BOX 2 (AFB2) of Arabidopsis thaliana (Mouse-ear cress).